Consider the following 306-residue polypeptide: GTPase Era (306 aa).

Residues 13–181 (YCGFIAIVGR…EKIVRESLHE (169 aa)) form the Era-type G domain. The segment at 21-28 (GRPNVGKS) is G1. Residue 21 to 28 (GRPNVGKS) coordinates GTP. Positions 47-51 (QTTRH) are G2. Positions 68–71 (DTPG) are G3. GTP contacts are provided by residues 68–72 (DTPGL) and 130–133 (NKID). A G4 region spans residues 130–133 (NKID). Residues 160–162 (ISA) form a G5 region. The region spanning 212–289 (TGDELPYSVT…HLELWVKVKS (78 aa)) is the KH type-2 domain.

It belongs to the TRAFAC class TrmE-Era-EngA-EngB-Septin-like GTPase superfamily. Era GTPase family. As to quaternary structure, monomer.

The protein resides in the cytoplasm. It is found in the cell inner membrane. In terms of biological role, an essential GTPase that binds both GDP and GTP, with rapid nucleotide exchange. Plays a role in 16S rRNA processing and 30S ribosomal subunit biogenesis and possibly also in cell cycle regulation and energy metabolism. The protein is GTPase Era of Pasteurella multocida (strain Pm70).